A 91-amino-acid polypeptide reads, in one-letter code: UPF0147 protein DKAM_0139 (91 aa).

It belongs to the UPF0147 family.

In Desulfurococcus amylolyticus (strain DSM 18924 / JCM 16383 / VKM B-2413 / 1221n) (Desulfurococcus kamchatkensis), this protein is UPF0147 protein DKAM_0139.